Reading from the N-terminus, the 492-residue chain is Ribose import ATP-binding protein RbsA (492 aa).

ABC transporter domains follow at residues 3–239 (IDMR…VGRK) and 238–492 (RKLE…TGGK). Position 35–42 (35–42 (GENGAGKS)) interacts with ATP.

This sequence belongs to the ABC transporter superfamily. Ribose importer (TC 3.A.1.2.1) family. The complex is composed of an ATP-binding protein (RbsA), two transmembrane proteins (RbsC) and a solute-binding protein (RbsB).

It localises to the cell membrane. The catalysed reaction is D-ribose(out) + ATP + H2O = D-ribose(in) + ADP + phosphate + H(+). Functionally, part of the ABC transporter complex RbsABC involved in ribose import. Responsible for energy coupling to the transport system. In Streptococcus agalactiae serotype Ia (strain ATCC 27591 / A909 / CDC SS700), this protein is Ribose import ATP-binding protein RbsA.